Reading from the N-terminus, the 428-residue chain is Probable oxidoreductase OrdL (428 aa).

This is Probable oxidoreductase OrdL (ordL) from Rhizobium meliloti (strain 1021) (Ensifer meliloti).